A 72-amino-acid polypeptide reads, in one-letter code: Potassium channel toxin epsilon-KTx 1.1 (72 aa).

A signal peptide spans 1-30 (MKLSCGFLLILLVLSAMIATFSEVEAMKPS). Intrachain disulfides connect cysteine 34–cysteine 42, cysteine 37–cysteine 58, cysteine 41–cysteine 51, and cysteine 46–cysteine 56. A propeptide spanning residues 60–72 (GRSDLNDELEKYQ) is cleaved from the precursor.

Belongs to the short scorpion toxin superfamily. Potassium channel inhibitor family. Epsilon-KTx 01 subfamily. In terms of tissue distribution, expressed by the venom gland.

The protein localises to the secreted. In terms of biological role, potassium channel blocker. At 3 uM, this toxin blocks voltage-independently voltage-gated potassium channels rKv1.2/KCNA2 (25%), hKv1.3/KCNA3 (27%), rKv4.2/KCND2 (25%), Kv10.1/KCNH1/EAG1 (15%), Kv11/hERG (12%), and Shaker-IR (10%). On hKv1.3/KCNA3, the IC(50) is 17.1 +-3.3 uM. This chain is Potassium channel toxin epsilon-KTx 1.1, found in Tityus serrulatus (Brazilian scorpion).